A 554-amino-acid polypeptide reads, in one-letter code: CTP synthase (554 aa).

Residues 1 to 265 (MTPLIFVTGG…DELVIVQFKL (265 aa)) are amidoligase domain. S13 lines the CTP pocket. S13 contributes to the UTP binding site. Residues 14–19 (SLGKGI) and D71 each bind ATP. Mg(2+) contacts are provided by D71 and E139. CTP-binding positions include 146–148 (DIE), 186–191 (KTKPTQ), and K222. UTP is bound by residues 186 to 191 (KTKPTQ) and K222. A Glutamine amidotransferase type-1 domain is found at 292–545 (TIAVVGKYVD…VRAAREKKAG (254 aa)). G353 is an L-glutamine binding site. C380 acts as the Nucleophile; for glutamine hydrolysis in catalysis. L-glutamine is bound by residues 381-384 (YGMQ), E404, and R471. Catalysis depends on residues H518 and E520.

This sequence belongs to the CTP synthase family. In terms of assembly, homotetramer.

It carries out the reaction UTP + L-glutamine + ATP + H2O = CTP + L-glutamate + ADP + phosphate + 2 H(+). The catalysed reaction is L-glutamine + H2O = L-glutamate + NH4(+). It catalyses the reaction UTP + NH4(+) + ATP = CTP + ADP + phosphate + 2 H(+). It functions in the pathway pyrimidine metabolism; CTP biosynthesis via de novo pathway; CTP from UDP: step 2/2. Its activity is regulated as follows. Allosterically activated by GTP, when glutamine is the substrate; GTP has no effect on the reaction when ammonia is the substrate. The allosteric effector GTP functions by stabilizing the protein conformation that binds the tetrahedral intermediate(s) formed during glutamine hydrolysis. Inhibited by the product CTP, via allosteric rather than competitive inhibition. Functionally, catalyzes the ATP-dependent amination of UTP to CTP with either L-glutamine or ammonia as the source of nitrogen. Regulates intracellular CTP levels through interactions with the four ribonucleotide triphosphates. The chain is CTP synthase from Xanthomonas oryzae pv. oryzae (strain MAFF 311018).